A 111-amino-acid chain; its full sequence is Prophage-derived-like uncharacterized protein YozM (111 aa).

Positions 1-24 are cleaved as a signal peptide; that stretch reads MKKRLIGFLVLVPALIMWGITLIE.

This Bacillus subtilis (strain 168) protein is Prophage-derived-like uncharacterized protein YozM (yozM).